We begin with the raw amino-acid sequence, 295 residues long: MSLRRRGIVVSFHSNMVTVEDEETGERILCKLRGKFRLQNLKIYVGDRVEYTPDETGSGVIENVLHRKNLLTKPHVANVDQVILVVTVKMPETSTYIIDKFLVLAEKNELETVMVFNKMDLYDEADLKKVRELEEIYSELYPIVKTSAKTGMGIEELKEYLKGKISTMAGLSGVGKSSLLNAINPGLKLRVSEVSEKLQRGRHTTTTAQLLKFDFGGYVVDTPGFANLEISDIEPEELKNYFKEFGDKQCFFSDCNHVDEPDCGVKEAVENGEIAESRYENYVKMFYELLGRRKK.

Residues 68–228 form the CP-type G domain; the sequence is KNLLTKPHVA…VVDTPGFANL (161 aa). GTP is bound by residues 117–120 and 170–178; these read NKMD and GLSGVGKSS. 4 residues coordinate Zn(2+): Cys250, Cys255, His257, and Cys263.

Belongs to the TRAFAC class YlqF/YawG GTPase family. RsgA subfamily. Monomer. Associates with 30S ribosomal subunit, binds 16S rRNA. It depends on Zn(2+) as a cofactor.

The protein resides in the cytoplasm. One of several proteins that assist in the late maturation steps of the functional core of the 30S ribosomal subunit. Helps release RbfA from mature subunits. May play a role in the assembly of ribosomal proteins into the subunit. Circularly permuted GTPase that catalyzes slow GTP hydrolysis, GTPase activity is stimulated by the 30S ribosomal subunit. The chain is Small ribosomal subunit biogenesis GTPase RsgA from Thermotoga petrophila (strain ATCC BAA-488 / DSM 13995 / JCM 10881 / RKU-1).